A 454-amino-acid polypeptide reads, in one-letter code: Trigger factor (454 aa).

Positions 170–256 (DSIVKVDFVE…IKSIKKRDLP (87 aa)) constitute a PPIase FKBP-type domain.

The protein belongs to the FKBP-type PPIase family. Tig subfamily.

The protein resides in the cytoplasm. The enzyme catalyses [protein]-peptidylproline (omega=180) = [protein]-peptidylproline (omega=0). Its function is as follows. Involved in protein export. Acts as a chaperone by maintaining the newly synthesized protein in an open conformation. Functions as a peptidyl-prolyl cis-trans isomerase. The sequence is that of Trigger factor (tig) from Borreliella burgdorferi (strain ATCC 35210 / DSM 4680 / CIP 102532 / B31) (Borrelia burgdorferi).